Here is a 2225-residue protein sequence, read N- to C-terminus: Multifunctional protein CAD (2225 aa).

Ala2 is modified (N-acetylalanine). The GATase (Glutamine amidotransferase) stretch occupies residues Ala2–Ile365. Residues Ser44, Gly222, and Gly224 each contribute to the L-glutamine site. The 187-residue stretch at Arg177–Gly363 folds into the Glutamine amidotransferase type-1 domain. Cys252 acts as the Nucleophile; for GATase activity in catalysis. Residues Leu253, Gln256, Asn294, Gly296, and Phe297 each contribute to the L-glutamine site. Active-site for GATase activity residues include His336 and Glu338. A linker region spans residues Gly366–Arg394. A CPSase A region spans residues Lys395–Pro933. The segment at Lys395 to Cys1455 is CPSase (Carbamoyl-phosphate synthase). Phosphothreonine; by MAPK1 is present on Thr456. Residues Arg515, Arg555, Gly561, Gly562, Lys592, Glu599, Gly625, Ile626, His627, Gln668, and Glu682 each coordinate ATP. In terms of domain architecture, ATP-grasp 1 spans Ala519–Leu711. The Mg(2+) site is built by Gln668, Glu682, and Asn684. Gln668, Glu682, and Asn684 together coordinate Mn(2+). Residue Lys747 is modified to N6-acetyllysine. The tract at residues His934–Cys1455 is CPSase B. Residue Ser1038 is modified to Phosphoserine. The 192-residue stretch at Ser1052–Met1243 folds into the ATP-grasp 2 domain. ATP-binding residues include Arg1088, Lys1127, Ile1129, Glu1134, Gly1159, Val1160, His1161, Ser1162, Gln1202, and Glu1214. Mg(2+) contacts are provided by Gln1202, Glu1214, and Asn1216. The Mn(2+) site is built by Gln1202, Glu1214, and Asn1216. An MGS-like domain is found at Phe1308 to Val1462. Ser1406 is modified (phosphoserine; by PKA). Lys1411 is modified (N6-acetyllysine). Residues Met1456–Leu1788 are DHOase (dihydroorotase). His1471 and His1473 together coordinate Zn(2+). Residues Arg1475 and Asn1505 each coordinate (S)-dihydroorotate. Zn(2+)-binding residues include Lys1556, His1590, Cys1613, His1614, and Glu1637. Lys1556 bears the N6-carboxylysine mark. Residue Arg1661 coordinates (S)-dihydroorotate. Asp1686 contributes to the Zn(2+) binding site. The For DHOase activity role is filled by Asp1686. (S)-dihydroorotate contacts are provided by His1690 and Pro1702. A linker region spans residues Arg1789–Leu1917. Residues Gly1815–Pro1885 are disordered. Positions Pro1825 to Pro1834 are enriched in low complexity. Ser1859 bears the Phosphoserine mark. The segment covering Glu1866–Glu1878 has biased composition (basic and acidic residues). The residue at position 1884 (Thr1884) is a Phosphothreonine. Phosphoserine occurs at positions 1900 and 1938. Residues Leu1918–Phe2225 are ATCase (Aspartate transcarbamylase). The carbamoyl phosphate site is built by Arg1975 and Thr1976. Position 2003 (Lys2003) interacts with L-aspartate. Carbamoyl phosphate is bound by residues Arg2024, His2052, and Gln2055. Positions 2085 and 2146 each coordinate L-aspartate. The carbamoyl phosphate site is built by Met2185 and Pro2186.

The protein in the N-terminal section; belongs to the CarA family. In the 2nd section; belongs to the CarB family. This sequence in the 3rd section; belongs to the metallo-dependent hydrolases superfamily. DHOase family. CAD subfamily. It in the C-terminal section; belongs to the aspartate/ornithine carbamoyltransferase superfamily. ATCase family. As to quaternary structure, homohexamer. Interacts with CIPC. Requires Zn(2+) as cofactor. It depends on Mg(2+) as a cofactor. The cofactor is Mn(2+). Activated by MAP kinase (Erk1/2) phosphorylation just prior to the S phase of the cell cycle, when the demand for pyrimidine nucleotides is greatest, and down-regulated as the cells emerge from S phase by protein kinase A (PKA) phosphorylation. Phosphorylation at Ser-1859 by RPS6KB1 downstream of MTOR promotes oligomerization and stimulates dihydroorotase activity. Phosphorylation at Ser-1406 reduces sensitivity to feedback inhibition by UTP.

The protein resides in the cytoplasm. The protein localises to the nucleus. It catalyses the reaction hydrogencarbonate + L-glutamine + 2 ATP + H2O = carbamoyl phosphate + L-glutamate + 2 ADP + phosphate + 2 H(+). The catalysed reaction is L-glutamine + H2O = L-glutamate + NH4(+). The enzyme catalyses hydrogencarbonate + NH4(+) + 2 ATP = carbamoyl phosphate + 2 ADP + phosphate + 2 H(+). It carries out the reaction carbamoyl phosphate + L-aspartate = N-carbamoyl-L-aspartate + phosphate + H(+). It catalyses the reaction (S)-dihydroorotate + H2O = N-carbamoyl-L-aspartate + H(+). It functions in the pathway pyrimidine metabolism; UMP biosynthesis via de novo pathway; (S)-dihydroorotate from bicarbonate: step 1/3. The protein operates within pyrimidine metabolism; UMP biosynthesis via de novo pathway; (S)-dihydroorotate from bicarbonate: step 2/3. It participates in pyrimidine metabolism; UMP biosynthesis via de novo pathway; (S)-dihydroorotate from bicarbonate: step 3/3. Its activity is regulated as follows. Allosterically regulated and controlled by phosphorylation. 5-phosphoribose 1-diphosphate (PRPP) is an activator while UMP and UTP are inhibitors of the CPSase reaction. Functionally, multifunctional protein that encodes the first 3 enzymatic activities of the de novo pyrimidine pathway: carbamoylphosphate synthetase (CPSase; EC 6.3.5.5), aspartate transcarbamylase (ATCase; EC 2.1.3.2) and dihydroorotase (DHOase; EC 3.5.2.3). The CPSase-function is accomplished in 2 steps, by a glutamine-dependent amidotransferase activity (GATase) that binds and cleaves glutamine to produce ammonia, followed by an ammonium-dependent carbamoyl phosphate synthetase, which reacts with the ammonia, hydrogencarbonate and ATP to form carbamoyl phosphate. The endogenously produced carbamoyl phosphate is sequestered and channeled to the ATCase active site. ATCase then catalyzes the formation of carbamoyl-L-aspartate from L-aspartate and carbamoyl phosphate. In the last step, DHOase catalyzes the cyclization of carbamoyl aspartate to dihydroorotate. The polypeptide is Multifunctional protein CAD (Cad) (Mus musculus (Mouse)).